We begin with the raw amino-acid sequence, 210 residues long: Protein GrpE (210 aa).

The disordered stretch occupies residues 1–42 (MANEERTIPETNVASERPEDPVESQTRAEGGEQIQEAAPETA).

The protein belongs to the GrpE family. In terms of assembly, homodimer.

The protein resides in the cytoplasm. Functionally, participates actively in the response to hyperosmotic and heat shock by preventing the aggregation of stress-denatured proteins, in association with DnaK and GrpE. It is the nucleotide exchange factor for DnaK and may function as a thermosensor. Unfolded proteins bind initially to DnaJ; upon interaction with the DnaJ-bound protein, DnaK hydrolyzes its bound ATP, resulting in the formation of a stable complex. GrpE releases ADP from DnaK; ATP binding to DnaK triggers the release of the substrate protein, thus completing the reaction cycle. Several rounds of ATP-dependent interactions between DnaJ, DnaK and GrpE are required for fully efficient folding. The polypeptide is Protein GrpE (Nitrosococcus oceani (strain ATCC 19707 / BCRC 17464 / JCM 30415 / NCIMB 11848 / C-107)).